Reading from the N-terminus, the 121-residue chain is MTTSSPTATTAQAHGRFIRGSVSKVRRVLDQIRGRTYRDALIMLEFMPYRSTGPITKVLRSAVANAEHNLGLDPSTLVISQASADMGPSMKRYRPRAQGRAYAIKKQTCHISIAVASQTDS.

The protein belongs to the universal ribosomal protein uL22 family. As to quaternary structure, part of the 50S ribosomal subunit.

Functionally, this protein binds specifically to 23S rRNA; its binding is stimulated by other ribosomal proteins, e.g. L4, L17, and L20. It is important during the early stages of 50S assembly. It makes multiple contacts with different domains of the 23S rRNA in the assembled 50S subunit and ribosome. In terms of biological role, the globular domain of the protein is located near the polypeptide exit tunnel on the outside of the subunit, while an extended beta-hairpin is found that lines the wall of the exit tunnel in the center of the 70S ribosome. This is Large ribosomal subunit protein uL22 from Synechococcus sp. (strain WH7803).